The primary structure comprises 193 residues: ATP-dependent Clp protease proteolytic subunit (193 aa).

S98 functions as the Nucleophile in the catalytic mechanism. Residue H123 is part of the active site.

It belongs to the peptidase S14 family. Fourteen ClpP subunits assemble into 2 heptameric rings which stack back to back to give a disk-like structure with a central cavity, resembling the structure of eukaryotic proteasomes.

The protein resides in the cytoplasm. It catalyses the reaction Hydrolysis of proteins to small peptides in the presence of ATP and magnesium. alpha-casein is the usual test substrate. In the absence of ATP, only oligopeptides shorter than five residues are hydrolyzed (such as succinyl-Leu-Tyr-|-NHMec, and Leu-Tyr-Leu-|-Tyr-Trp, in which cleavage of the -Tyr-|-Leu- and -Tyr-|-Trp bonds also occurs).. Its function is as follows. Cleaves peptides in various proteins in a process that requires ATP hydrolysis. Has a chymotrypsin-like activity. Plays a major role in the degradation of misfolded proteins. The chain is ATP-dependent Clp protease proteolytic subunit from Haemophilus influenzae (strain PittEE).